The chain runs to 34 residues: Photosystem II reaction center protein M (34 aa).

Residues 7–27 form a helical membrane-spanning segment; it reads GFVATLLFVLVPAIFLIILYI.

Belongs to the PsbM family. PSII is composed of 1 copy each of membrane proteins PsbA, PsbB, PsbC, PsbD, PsbE, PsbF, PsbH, PsbI, PsbJ, PsbK, PsbL, PsbM, PsbT, PsbX, PsbY, PsbZ, Psb30/Ycf12, peripheral proteins PsbO, CyanoQ (PsbQ), PsbU, PsbV and a large number of cofactors. It forms dimeric complexes.

It localises to the cellular thylakoid membrane. Functionally, one of the components of the core complex of photosystem II (PSII). PSII is a light-driven water:plastoquinone oxidoreductase that uses light energy to abstract electrons from H(2)O, generating O(2) and a proton gradient subsequently used for ATP formation. It consists of a core antenna complex that captures photons, and an electron transfer chain that converts photonic excitation into a charge separation. This subunit is found at the monomer-monomer interface. The chain is Photosystem II reaction center protein M from Synechococcus sp. (strain RCC307).